The primary structure comprises 172 residues: Adenine phosphoribosyltransferase (172 aa).

Belongs to the purine/pyrimidine phosphoribosyltransferase family. As to quaternary structure, homodimer.

The protein resides in the cytoplasm. It carries out the reaction AMP + diphosphate = 5-phospho-alpha-D-ribose 1-diphosphate + adenine. The protein operates within purine metabolism; AMP biosynthesis via salvage pathway; AMP from adenine: step 1/1. Its function is as follows. Catalyzes a salvage reaction resulting in the formation of AMP, that is energically less costly than de novo synthesis. This is Adenine phosphoribosyltransferase from Clostridium novyi (strain NT).